The chain runs to 150 residues: D-aminoacyl-tRNA deacylase (150 aa).

A Gly-cisPro motif, important for rejection of L-amino acids motif is present at residues 137–138; sequence GP.

This sequence belongs to the DTD family. As to quaternary structure, homodimer.

It localises to the cytoplasm. It catalyses the reaction glycyl-tRNA(Ala) + H2O = tRNA(Ala) + glycine + H(+). The catalysed reaction is a D-aminoacyl-tRNA + H2O = a tRNA + a D-alpha-amino acid + H(+). In terms of biological role, an aminoacyl-tRNA editing enzyme that deacylates mischarged D-aminoacyl-tRNAs. Also deacylates mischarged glycyl-tRNA(Ala), protecting cells against glycine mischarging by AlaRS. Acts via tRNA-based rather than protein-based catalysis; rejects L-amino acids rather than detecting D-amino acids in the active site. By recycling D-aminoacyl-tRNA to D-amino acids and free tRNA molecules, this enzyme counteracts the toxicity associated with the formation of D-aminoacyl-tRNA entities in vivo and helps enforce protein L-homochirality. This chain is D-aminoacyl-tRNA deacylase, found in Geotalea daltonii (strain DSM 22248 / JCM 15807 / FRC-32) (Geobacter daltonii).